The sequence spans 876 residues: Bifunctional uridylyltransferase/uridylyl-removing enzyme (876 aa).

The uridylyltransferase stretch occupies residues 1–332 (MPYQSPITFQ…NNGEEAEAVI (332 aa)). The tract at residues 333–692 (IDDDFQRRGN…LSKKATRGGT (360 aa)) is uridylyl-removing. The 123-residue stretch at 451–573 (VDEHSIRLLK…VRDEERLEYL (123 aa)) folds into the HD domain. ACT domains are found at residues 693-777 (EVFI…RIPR) and 800-876 (LMEF…PSAQ).

This sequence belongs to the GlnD family. The cofactor is Mg(2+).

The catalysed reaction is [protein-PII]-L-tyrosine + UTP = [protein-PII]-uridylyl-L-tyrosine + diphosphate. It catalyses the reaction [protein-PII]-uridylyl-L-tyrosine + H2O = [protein-PII]-L-tyrosine + UMP + H(+). Uridylyltransferase (UTase) activity is inhibited by glutamine, while glutamine activates uridylyl-removing (UR) activity. Functionally, modifies, by uridylylation and deuridylylation, the PII regulatory proteins (GlnB and homologs), in response to the nitrogen status of the cell that GlnD senses through the glutamine level. Under low glutamine levels, catalyzes the conversion of the PII proteins and UTP to PII-UMP and PPi, while under higher glutamine levels, GlnD hydrolyzes PII-UMP to PII and UMP (deuridylylation). Thus, controls uridylylation state and activity of the PII proteins, and plays an important role in the regulation of nitrogen assimilation and metabolism. The sequence is that of Bifunctional uridylyltransferase/uridylyl-removing enzyme from Vibrio cholerae serotype O1 (strain ATCC 39315 / El Tor Inaba N16961).